The primary structure comprises 918 residues: Serine/threonine-protein kinase D1 (918 aa).

Tyrosine 93 carries the post-translational modification Phosphotyrosine. The segment at 144–194 adopts a Phorbol-ester/DAG-type 1 zinc-finger fold; sequence PHALFVHSYRAPAFCDHCGEMLWGLVRQGLKCEGCGLNYHKRCAFKIPNNC. Phosphoserine is present on residues serine 203, serine 206, serine 217, and serine 221. A Phorbol-ester/DAG-type 2 zinc finger spans residues 276–326; that stretch reads PHTFVIHSYTRPTVCQFCKKLLKGLFRQGLQCKDCRFNCHKRCAPKVPNNC. Disordered regions lie at residues 338–362 and 380–408; these read SPGAESDVVMEEGSDDNDSERNSGL and EGQSDGAEMQDPDADQEDSNRTISPSTSN. Composition is skewed to acidic residues over residues 345–355 and 387–396; these read VVMEEGSDDND and EMQDPDADQE. Residue serine 351 is modified to Phosphoserine. Phosphoserine; by MAPK13 occurs at positions 403 and 407. Positions 428 to 547 constitute a PH domain; the sequence is TVMKEGWMVH…WEVAIQHALM (120 aa). Residue tyrosine 438 is modified to Phosphotyrosine. Serine 454 bears the Phosphoserine mark. The residue at position 469 (tyrosine 469) is a Phosphotyrosine; by ABL. Phosphotyrosine is present on tyrosine 508. Serine 554 is modified (phosphoserine). In terms of domain architecture, Protein kinase spans 589–845; sequence IFPDEVLGSG…VDKTLSHPWL (257 aa). ATP contacts are provided by residues 595–603 and lysine 618; that span reads LGSGQFGIV. Aspartate 712 serves as the catalytic Proton acceptor. Serine 744 carries the phosphoserine; by PKC/PRKCD modification. Residue serine 748 is modified to Phosphoserine; by autocatalysis and PKC/PRKCD. Tyrosine 755 is modified (phosphotyrosine). A Phosphoserine; by autocatalysis modification is found at serine 916.

This sequence belongs to the protein kinase superfamily. CAMK Ser/Thr protein kinase family. PKD subfamily. Interacts (via N-terminus) with ADAP1/CENTA1. Interacts with MAPK13. Interacts with DAPK1 in an oxidative stress-regulated manner. Interacts with USP28; the interaction induces phosphorylation of USP28 and activated KRAS-mediated stabilization of ZNF304. Interacts with AKAP13 (via C-terminal domain). Mg(2+) is required as a cofactor. Phosphorylated at Ser-403 and Ser-407 by MAPK13 during regulation of insulin secretion in pancreatic beta cells. Phosphorylated by DAPK1. Phosphorylated at Tyr-93 and by ABL at Tyr-469, which primes the kinase in response to oxidative stress, and promotes a second step activating phosphorylation at Ser-744/Ser-748 by PKRD. Phosphorylated on Ser-916 upon S.enterica infection in macrophages.

The protein resides in the cytoplasm. It localises to the cell membrane. It is found in the golgi apparatus. The protein localises to the trans-Golgi network. The enzyme catalyses L-seryl-[protein] + ATP = O-phospho-L-seryl-[protein] + ADP + H(+). It carries out the reaction L-threonyl-[protein] + ATP = O-phospho-L-threonyl-[protein] + ADP + H(+). Activated by DAG and phorbol esters. Phorbol-ester/DAG-type domain 1 binds DAG with high affinity and appears to play the dominant role in mediating translocation to the cell membrane and trans-Golgi network. Phorbol-ester/DAG-type domain 2 binds phorbol ester with higher affinity. Autophosphorylation of Ser-748 and phosphorylation of Ser-744 by PKC relieves auto-inhibition by the PH domain. Phosphorylation on Tyr-469 by the SRC-ABL1 pathway in response to oxidative stress, is also required for activation. Activated by DAPK1 under oxidative stress. Serine/threonine-protein kinase that converts transient diacylglycerol (DAG) signals into prolonged physiological effects downstream of PKC, and is involved in the regulation of MAPK8/JNK1 and Ras signaling, Golgi membrane integrity and trafficking, cell survival through NF-kappa-B activation, cell migration, cell differentiation by mediating HDAC7 nuclear export, cell proliferation via MAPK1/3 (ERK1/2) signaling, and plays a role in cardiac hypertrophy, VEGFA-induced angiogenesis, genotoxic-induced apoptosis and flagellin-stimulated inflammatory response. Phosphorylates the epidermal growth factor receptor (EGFR) on dual threonine residues, which leads to the suppression of epidermal growth factor (EGF)-induced MAPK8/JNK1 activation and subsequent JUN phosphorylation. Phosphorylates RIN1, inducing RIN1 binding to 14-3-3 proteins YWHAB, YWHAE and YWHAZ and increased competition with RAF1 for binding to GTP-bound form of Ras proteins (NRAS, HRAS and KRAS). Acts downstream of the heterotrimeric G-protein beta/gamma-subunit complex to maintain the structural integrity of the Golgi membranes, and is required for protein transport along the secretory pathway. In the trans-Golgi network (TGN), regulates the fission of transport vesicles that are on their way to the plasma membrane. May act by activating the lipid kinase phosphatidylinositol 4-kinase beta (PI4KB) at the TGN for the local synthesis of phosphorylated inositol lipids, which induces a sequential production of DAG, phosphatidic acid (PA) and lyso-PA (LPA) that are necessary for membrane fission and generation of specific transport carriers to the cell surface. Under oxidative stress, is phosphorylated at Tyr-469 via SRC-ABL1 and contributes to cell survival by activating IKK complex and subsequent nuclear translocation and activation of NFKB1. Involved in cell migration by regulating integrin alpha-5/beta-3 recycling and promoting its recruitment in newly forming focal adhesion. In osteoblast differentiation, mediates the bone morphogenetic protein 2 (BMP2)-induced nuclear export of HDAC7, which results in the inhibition of HDAC7 transcriptional repression of RUNX2. In neurons, plays an important role in neuronal polarity by regulating the biogenesis of TGN-derived dendritic vesicles, and is involved in the maintenance of dendritic arborization and Golgi structure in hippocampal cells. May potentiate mitogenesis induced by the neuropeptide bombesin or vasopressin by mediating an increase in the duration of MAPK1/3 (ERK1/2) signaling, which leads to accumulation of immediate-early gene products including FOS that stimulate cell cycle progression. Plays an important role in the proliferative response induced by low calcium in keratinocytes, through sustained activation of MAPK1/3 (ERK1/2) pathway. Downstream of novel PKC signaling, plays a role in cardiac hypertrophy by phosphorylating HDAC5, which in turn triggers XPO1/CRM1-dependent nuclear export of HDAC5, MEF2A transcriptional activation and induction of downstream target genes that promote myocyte hypertrophy and pathological cardiac remodeling. Mediates cardiac troponin I (TNNI3) phosphorylation at the PKA sites, which results in reduced myofilament calcium sensitivity, and accelerated crossbridge cycling kinetics. The PRKD1-HDAC5 pathway is also involved in angiogenesis by mediating VEGFA-induced specific subset of gene expression, cell migration, and tube formation. In response to VEGFA, is necessary and required for HDAC7 phosphorylation which induces HDAC7 nuclear export and endothelial cell proliferation and migration. During apoptosis induced by cytarabine and other genotoxic agents, PRKD1 is cleaved by caspase-3 at Asp-378, resulting in activation of its kinase function and increased sensitivity of cells to the cytotoxic effects of genotoxic agents. In epithelial cells, is required for transducing flagellin-stimulated inflammatory responses by binding and phosphorylating TLR5, which contributes to MAPK14/p38 activation and production of inflammatory cytokines. Acts as an activator of NLRP3 inflammasome assembly by mediating phosphorylation of NLRP3. May play a role in inflammatory response by mediating activation of NF-kappa-B. May be involved in pain transmission by directly modulating TRPV1 receptor. Plays a role in activated KRAS-mediated stabilization of ZNF304 in colorectal cancer (CRC) cells. Regulates nuclear translocation of transcription factor TFEB in macrophages upon live S.enterica infection. The sequence is that of Serine/threonine-protein kinase D1 (Prkd1) from Rattus norvegicus (Rat).